Here is a 429-residue protein sequence, read N- to C-terminus: Glutamate-1-semialdehyde 2,1-aminomutase (429 aa).

N6-(pyridoxal phosphate)lysine is present on lysine 267.

Belongs to the class-III pyridoxal-phosphate-dependent aminotransferase family. HemL subfamily. Homodimer. It depends on pyridoxal 5'-phosphate as a cofactor.

The protein localises to the cytoplasm. It catalyses the reaction (S)-4-amino-5-oxopentanoate = 5-aminolevulinate. It functions in the pathway porphyrin-containing compound metabolism; protoporphyrin-IX biosynthesis; 5-aminolevulinate from L-glutamyl-tRNA(Glu): step 2/2. The protein is Glutamate-1-semialdehyde 2,1-aminomutase of Xanthomonas oryzae pv. oryzae (strain PXO99A).